The following is a 657-amino-acid chain: Penicillin-binding protein activator LpoA (657 aa).

The N-terminal stretch at 1–25 (MLSSTFVRSKAGLVPVILAALILAA) is a signal peptide. C26 carries the N-palmitoyl cysteine lipid modification. Residue C26 is the site of S-diacylglycerol cysteine attachment.

Belongs to the LpoA family. In terms of assembly, interacts with PBP1a.

The protein resides in the cell outer membrane. Functionally, regulator of peptidoglycan synthesis that is essential for the function of penicillin-binding protein 1A (PBP1a). In Yersinia pestis bv. Antiqua (strain Angola), this protein is Penicillin-binding protein activator LpoA.